Here is a 363-residue protein sequence, read N- to C-terminus: Putative lipoate-protein ligase A (363 aa).

The region spanning 49–229 is the BPL/LPL catalytic domain; the sequence is STAKHCLLLY…CFLLHKSHST (181 aa). ATP is bound by residues arginine 91, 96–99, and lysine 152; that span reads GTVF. Lysine 152 serves as a coordination point for (R)-lipoate.

This sequence belongs to the LplA family. As to quaternary structure, monomer.

The protein localises to the cytoplasm. It catalyses the reaction L-lysyl-[lipoyl-carrier protein] + (R)-lipoate + ATP = N(6)-[(R)-lipoyl]-L-lysyl-[lipoyl-carrier protein] + AMP + diphosphate + H(+). It participates in protein modification; protein lipoylation via exogenous pathway; protein N(6)-(lipoyl)lysine from lipoate: step 1/2. It functions in the pathway protein modification; protein lipoylation via exogenous pathway; protein N(6)-(lipoyl)lysine from lipoate: step 2/2. Functionally, catalyzes both the ATP-dependent activation of exogenously supplied lipoate to lipoyl-AMP and the transfer of the activated lipoyl onto the lipoyl domains of lipoate-dependent enzymes. This chain is Putative lipoate-protein ligase A (aim22), found in Schizosaccharomyces pombe (strain 972 / ATCC 24843) (Fission yeast).